A 271-amino-acid chain; its full sequence is Phosphatidylglycerol--prolipoprotein diacylglyceryl transferase (271 aa).

A run of 7 helical transmembrane segments spans residues 21 to 41, 60 to 80, 95 to 115, 124 to 144, 177 to 197, 203 to 223, and 236 to 256; these read LAVR…MWLA, LLFA…VIFY, VWTG…AMFW, FFGV…MGRI, QLYE…WFIG, GSVS…VEYV, and FISM…LMMV. Arg-143 contributes to the a 1,2-diacyl-sn-glycero-3-phospho-(1'-sn-glycerol) binding site.

The protein belongs to the Lgt family.

The protein resides in the cell inner membrane. The catalysed reaction is L-cysteinyl-[prolipoprotein] + a 1,2-diacyl-sn-glycero-3-phospho-(1'-sn-glycerol) = an S-1,2-diacyl-sn-glyceryl-L-cysteinyl-[prolipoprotein] + sn-glycerol 1-phosphate + H(+). The protein operates within protein modification; lipoprotein biosynthesis (diacylglyceryl transfer). Functionally, catalyzes the transfer of the diacylglyceryl group from phosphatidylglycerol to the sulfhydryl group of the N-terminal cysteine of a prolipoprotein, the first step in the formation of mature lipoproteins. In Vibrio cholerae serotype O1 (strain ATCC 39541 / Classical Ogawa 395 / O395), this protein is Phosphatidylglycerol--prolipoprotein diacylglyceryl transferase.